The following is a 374-amino-acid chain: DNA primase small subunit PriS (374 aa).

Catalysis depends on residues D99, D101, and D281.

The protein belongs to the eukaryotic-type primase small subunit family. As to quaternary structure, heterodimer of a small subunit (PriS) and a large subunit (PriL). Requires Mg(2+) as cofactor. Mn(2+) is required as a cofactor.

In terms of biological role, catalytic subunit of DNA primase, an RNA polymerase that catalyzes the synthesis of short RNA molecules used as primers for DNA polymerase during DNA replication. The small subunit contains the primase catalytic core and has DNA synthesis activity on its own. Binding to the large subunit stabilizes and modulates the activity, increasing the rate of DNA synthesis while decreasing the length of the DNA fragments, and conferring RNA synthesis capability. The DNA polymerase activity may enable DNA primase to also catalyze primer extension after primer synthesis. May also play a role in DNA repair. This Methanoregula boonei (strain DSM 21154 / JCM 14090 / 6A8) protein is DNA primase small subunit PriS.